A 298-amino-acid chain; its full sequence is ATP synthase gamma chain (298 aa).

It belongs to the ATPase gamma chain family. F-type ATPases have 2 components, CF(1) - the catalytic core - and CF(0) - the membrane proton channel. CF(1) has five subunits: alpha(3), beta(3), gamma(1), delta(1), epsilon(1). CF(0) has three main subunits: a, b and c.

It is found in the cell inner membrane. Functionally, produces ATP from ADP in the presence of a proton gradient across the membrane. The gamma chain is believed to be important in regulating ATPase activity and the flow of protons through the CF(0) complex. The protein is ATP synthase gamma chain of Francisella tularensis subsp. tularensis (strain WY96-3418).